A 109-amino-acid polypeptide reads, in one-letter code: Nucleoid-associated protein LGAS_0369 (109 aa).

Belongs to the YbaB/EbfC family. Homodimer.

It localises to the cytoplasm. The protein resides in the nucleoid. Binds to DNA and alters its conformation. May be involved in regulation of gene expression, nucleoid organization and DNA protection. This is Nucleoid-associated protein LGAS_0369 from Lactobacillus gasseri (strain ATCC 33323 / DSM 20243 / BCRC 14619 / CIP 102991 / JCM 1131 / KCTC 3163 / NCIMB 11718 / NCTC 13722 / AM63).